A 498-amino-acid polypeptide reads, in one-letter code: MRINPTTSGPGVSTLEEKNLGSIAQIIGPVLDVAFPPGKMPNIYNALVVKGRDTVGQQINVTCEVQQLLGNNRVRAVAMSATDGLMRGMEVIDTGAPLSVPVGGATLGRIFNVLGEPVDNLGPVDTRTTSPIHRSAPAFIQLDTKLSIFETGIKVVDLLAPYRRGGKIGLFGGAGVGKTVLIMELINNIAKAHGGVSVFGGVGERTREGNDLYMEMKESGVINEQNIAESKVALVYGQMNEPPGARMRVGLTALTMAEYFRDVNEQDVLLFIDNIFRFVQAGSEVSALLGRMPSAVGYQPTLSTEMGSLQERITSTKEGSITSIQAVYVPADDLTDPAPATTFAHLDATTVLSRGLAAKGIYPAVDPLDSTSTMLQPRIVGEEHYETAQRVKQTSQRYKELQDIIAILGLDELSEEDRLTVARARKIERFLSQPFFVAEVFTGSPGKYVGLAETIRGFQLILSGELDGLPEQAFYLVGNIDEATAKAMNLEVESXLKK.

172 to 179 (GGAGVGKT) provides a ligand contact to ATP.

Belongs to the ATPase alpha/beta chains family. F-type ATPases have 2 components, CF(1) - the catalytic core - and CF(0) - the membrane proton channel. CF(1) has five subunits: alpha(3), beta(3), gamma(1), delta(1), epsilon(1). CF(0) has four main subunits: a(1), b(1), b'(1) and c(9-12).

The protein resides in the plastid. It localises to the chloroplast thylakoid membrane. It carries out the reaction ATP + H2O + 4 H(+)(in) = ADP + phosphate + 5 H(+)(out). Produces ATP from ADP in the presence of a proton gradient across the membrane. The catalytic sites are hosted primarily by the beta subunits. In Myristica fragrans (Nutmeg), this protein is ATP synthase subunit beta, chloroplastic.